A 587-amino-acid polypeptide reads, in one-letter code: Protein cereblon (587 aa).

Disordered regions lie at residues methionine 1–tyrosine 56, aspartate 78–asparagine 113, and phenylalanine 157–glycine 195. 2 stretches are compositionally biased toward polar residues: residues glutamate 22 to glutamine 31 and serine 86 to serine 96. Over residues glutamine 159–glutamate 168 the composition is skewed to basic and acidic residues. The span at threonine 170–aspartate 181 shows a compositional bias: acidic residues. Residues proline 182–proline 191 are compositionally biased toward pro residues. The 227-residue stretch at histidine 227–threonine 453 folds into the Lon N-terminal domain. Residues glutamate 452–lysine 561 form the CULT domain. Zn(2+) is bound by residues cysteine 457, cysteine 460, cysteine 526, and cysteine 529.

It belongs to the CRBN family. Likely a component of a DCX (DDB1-CUL4-X-box) protein ligase complex. May interact with pic/DDB1. In terms of processing, ubiquitinated.

The protein localises to the nucleus. It participates in protein modification; protein ubiquitination. Functionally, substrate recognition component of a DCX (DDB1-CUL4-X-box) E3 protein ligase complex that mediates the ubiquitination and subsequent proteasomal degradation of target proteins. Has an essential role in mediating growth by negatively regulating insulin signaling. It also has a role in maintaining presynaptic function in the neuromuscular junction synapses of third-instar larvae. The chain is Protein cereblon from Drosophila simulans (Fruit fly).